The chain runs to 610 residues: Aspartate--tRNA(Asp/Asn) ligase (610 aa).

Position 196 (Glu-196) interacts with L-aspartate. Residues 220–223 form an aspartate region; it reads QIFK. Arg-242 contacts L-aspartate. ATP-binding positions include 242-244 and Gln-251; that span reads RDE. Position 465 (His-465) interacts with L-aspartate. Glu-499 lines the ATP pocket. Residue Arg-506 participates in L-aspartate binding. ATP is bound at residue 551–554; that stretch reads GMDR.

It belongs to the class-II aminoacyl-tRNA synthetase family. Type 1 subfamily. In terms of assembly, homodimer.

The protein localises to the cytoplasm. It carries out the reaction tRNA(Asx) + L-aspartate + ATP = L-aspartyl-tRNA(Asx) + AMP + diphosphate. Aspartyl-tRNA synthetase with relaxed tRNA specificity since it is able to aspartylate not only its cognate tRNA(Asp) but also tRNA(Asn). Reaction proceeds in two steps: L-aspartate is first activated by ATP to form Asp-AMP and then transferred to the acceptor end of tRNA(Asp/Asn). The sequence is that of Aspartate--tRNA(Asp/Asn) ligase from Nitratidesulfovibrio vulgaris (strain ATCC 29579 / DSM 644 / CCUG 34227 / NCIMB 8303 / VKM B-1760 / Hildenborough) (Desulfovibrio vulgaris).